The sequence spans 131 residues: Aspartate 1-decarboxylase (131 aa).

Serine 25 acts as the Schiff-base intermediate with substrate; via pyruvic acid in catalysis. Serine 25 is modified (pyruvic acid (Ser)). Threonine 57 provides a ligand contact to substrate. The active-site Proton donor is tyrosine 58. Glycine 73–alanine 75 lines the substrate pocket.

The protein belongs to the PanD family. In terms of assembly, heterooctamer of four alpha and four beta subunits. Pyruvate serves as cofactor. Is synthesized initially as an inactive proenzyme, which is activated by self-cleavage at a specific serine bond to produce a beta-subunit with a hydroxyl group at its C-terminus and an alpha-subunit with a pyruvoyl group at its N-terminus.

Its subcellular location is the cytoplasm. It carries out the reaction L-aspartate + H(+) = beta-alanine + CO2. Its pathway is cofactor biosynthesis; (R)-pantothenate biosynthesis; beta-alanine from L-aspartate: step 1/1. Catalyzes the pyruvoyl-dependent decarboxylation of aspartate to produce beta-alanine. The polypeptide is Aspartate 1-decarboxylase (Anaeromyxobacter dehalogenans (strain 2CP-C)).